Reading from the N-terminus, the 462-residue chain is GTPase Der (462 aa).

EngA-type G domains lie at 9-171 (KTIA…NLNQ) and 201-372 (IQVG…ECFS). Residues 15 to 22 (GQPNVGKS), 62 to 66 (DTGGM), 123 to 126 (NKID), 207 to 214 (GRVNVGKS), 254 to 258 (DTAGI), and 318 to 321 (NKWD) each bind GTP. The KH-like domain maps to 373 to 457 (KRIPTSLLNS…PLILNAKDKK (85 aa)).

This sequence belongs to the TRAFAC class TrmE-Era-EngA-EngB-Septin-like GTPase superfamily. EngA (Der) GTPase family. In terms of assembly, associates with the 50S ribosomal subunit.

Functionally, GTPase that plays an essential role in the late steps of ribosome biogenesis. This chain is GTPase Der, found in Helicobacter pylori (strain P12).